The primary structure comprises 380 residues: 1-deoxy-D-xylulose 5-phosphate reductoisomerase 2 (380 aa).

Residues Ser-10, Gly-11, Ser-12, Ile-13, Gly-36, Lys-37, Asn-38, and Asn-120 each contribute to the NADPH site. Lys-121 is a 1-deoxy-D-xylulose 5-phosphate binding site. Glu-122 contributes to the NADPH binding site. Asp-146 contacts Mn(2+). Residues Ser-147, Glu-148, Ser-172, and His-195 each coordinate 1-deoxy-D-xylulose 5-phosphate. Glu-148 is a binding site for Mn(2+). Gly-201 is an NADPH binding site. 1-deoxy-D-xylulose 5-phosphate is bound by residues Ser-208, Asn-213, Lys-214, and Glu-217. Glu-217 contributes to the Mn(2+) binding site.

Belongs to the DXR family. Mg(2+) is required as a cofactor. Requires Mn(2+) as cofactor.

It catalyses the reaction 2-C-methyl-D-erythritol 4-phosphate + NADP(+) = 1-deoxy-D-xylulose 5-phosphate + NADPH + H(+). It functions in the pathway isoprenoid biosynthesis; isopentenyl diphosphate biosynthesis via DXP pathway; isopentenyl diphosphate from 1-deoxy-D-xylulose 5-phosphate: step 1/6. Its function is as follows. Catalyzes the NADPH-dependent rearrangement and reduction of 1-deoxy-D-xylulose-5-phosphate (DXP) to 2-C-methyl-D-erythritol 4-phosphate (MEP). In Bacillus anthracis, this protein is 1-deoxy-D-xylulose 5-phosphate reductoisomerase 2.